The primary structure comprises 251 residues: Hydroxyacylglutathione hydrolase (251 aa).

Residues His53, His55, Asp57, His58, His110, Asp127, and His165 each contribute to the Zn(2+) site.

The protein belongs to the metallo-beta-lactamase superfamily. Glyoxalase II family. Monomer. It depends on Zn(2+) as a cofactor.

It carries out the reaction an S-(2-hydroxyacyl)glutathione + H2O = a 2-hydroxy carboxylate + glutathione + H(+). The protein operates within secondary metabolite metabolism; methylglyoxal degradation; (R)-lactate from methylglyoxal: step 2/2. Its function is as follows. Thiolesterase that catalyzes the hydrolysis of S-D-lactoyl-glutathione to form glutathione and D-lactic acid. This chain is Hydroxyacylglutathione hydrolase, found in Escherichia coli O17:K52:H18 (strain UMN026 / ExPEC).